A 260-amino-acid chain; its full sequence is Circadian clock-controlled protein daywake (260 aa).

An N-terminal signal peptide occupies residues 1–25 (MQLTSASVCLLWMGLLSWVSHRIDA).

The protein belongs to the TO family.

Component of the circadian clock or downstream effector of clock function. Required for suppressing daytime sleep (siesta) under ambient environmental temperatures. Part of a heat avoidance mechanism that modulates daytime sleep behavior under different environmental temperatures to minimize the risk of heat exposure. Under cooler ambient temperatures, suppresses daytime sleep (siesta) and thus allows for longer periods of daytime activity. The protein is Circadian clock-controlled protein daywake of Drosophila yakuba (Fruit fly).